The following is a 49-amino-acid chain: Large ribosomal subunit protein bL36 (49 aa).

Belongs to the bacterial ribosomal protein bL36 family.

The chain is Large ribosomal subunit protein bL36 from Pseudomonas fluorescens (strain ATCC BAA-477 / NRRL B-23932 / Pf-5).